Consider the following 114-residue polypeptide: U5-lycotoxin-Ls1a (114 aa).

The N-terminal stretch at 1–20 (MKYQILFGVVFLTLLSYCYS) is a signal peptide. The propeptide occupies 21 to 45 (EIEDEFENFVDEEMVEADDPFSLAR). Intrachain disulfides connect Cys51–Cys66, Cys65–Cys93, and Cys77–Cys91.

This sequence belongs to the neurotoxin 19 (CSTX) family. 04 (U1-Lctx) subfamily. In terms of tissue distribution, expressed by the venom gland.

The protein resides in the secreted. This Lycosa singoriensis (Wolf spider) protein is U5-lycotoxin-Ls1a.